Reading from the N-terminus, the 89-residue chain is Protein S100-A8 (89 aa).

Residue Ala2 is modified to N-acetylalanine. EF-hand domains follow at residues 13–48 and 46–81; these read IEVY…FVQN and VQNK…VGVA. Positions 17 and 27 each coordinate Zn(2+). Position 33 (Asp33) interacts with Ca(2+). Cys42 is subject to S-nitrosocysteine. Asp59, Asn61, Asp63, and Glu70 together coordinate Ca(2+). His83 provides a ligand contact to Zn(2+).

Belongs to the S-100 family. In terms of assembly, homodimer. Preferentially exists as a heterodimer or heterotetramer with S100A9 known as calprotectin (S100A8/A9). S100A8 interacts with AGER, ATP2A2 and with the heterodimeric complex formed by TLR4 and LY96. Calprotectin (S100A8/9) interacts with CEACAM3 and tubulin filaments in a calcium-dependent manner. Heterotetrameric calprotectin (S100A8/A9) interacts with ANXA6 and associates with tubulin filaments in activated monocytes. S100A8 and calprotectin (S100A8/9) interact with NCF2/P67PHOX, RAC1 and RAC2. Calprotectin (S100A8/9) interacts with CYBA and CYBB. Calprotectin (S100A8/9) interacts with NOS2 to form the iNOS-S100A8/A9 transnitrosylase complex. Calprotectin (S100A8/9) interacts with CD69.

It localises to the secreted. It is found in the cytoplasm. The protein localises to the cytoskeleton. Its subcellular location is the cell membrane. S100A8 is a calcium- and zinc-binding protein which plays a prominent role in the regulation of inflammatory processes and immune response. It can induce neutrophil chemotaxis and adhesion. Predominantly found as calprotectin (S100A8/A9) which has a wide plethora of intra- and extracellular functions. The intracellular functions include: facilitating leukocyte arachidonic acid trafficking and metabolism, modulation of the tubulin-dependent cytoskeleton during migration of phagocytes and activation of the neutrophilic NADPH-oxidase. Also participates in regulatory T-cell differentiation together with CD69. Activates NADPH-oxidase by facilitating the enzyme complex assembly at the cell membrane, transferring arachidonic acid, an essential cofactor, to the enzyme complex and S100A8 contributes to the enzyme assembly by directly binding to NCF2/P67PHOX. The extracellular functions involve pro-inflammatory, antimicrobial, oxidant-scavenging and apoptosis-inducing activities. Its pro-inflammatory activity includes recruitment of leukocytes, promotion of cytokine and chemokine production, and regulation of leukocyte adhesion and migration. Acts as an alarmin or a danger associated molecular pattern (DAMP) molecule and stimulates innate immune cells via binding to pattern recognition receptors such as Toll-like receptor 4 (TLR4) and receptor for advanced glycation endproducts (AGER). Binding to TLR4 and AGER activates the MAP-kinase and NF-kappa-B signaling pathways resulting in the amplification of the pro-inflammatory cascade. Has antimicrobial activity towards bacteria and fungi and exerts its antimicrobial activity probably via chelation of Zn(2+) which is essential for microbial growth. Can induce cell death via autophagy and apoptosis and this occurs through the cross-talk of mitochondria and lysosomes via reactive oxygen species (ROS) and the process involves BNIP3. Can regulate neutrophil number and apoptosis by an anti-apoptotic effect; regulates cell survival via ITGAM/ITGB and TLR4 and a signaling mechanism involving MEK-ERK. Its role as an oxidant scavenger has a protective role in preventing exaggerated tissue damage by scavenging oxidants. The iNOS-S100A8/A9 transnitrosylase complex is proposed to direct selective inflammatory stimulus-dependent S-nitrosylation of multiple targets such as GAPDH, ANXA5, EZR, MSN and VIM by recognizing a [IL]-x-C-x-x-[DE] motif; S100A8 seems to contribute to S-nitrosylation site selectivity. In Rattus norvegicus (Rat), this protein is Protein S100-A8 (S100a8).